We begin with the raw amino-acid sequence, 539 residues long: CTP synthase (539 aa).

The interval 1–267 (MTKYIFVTGG…DQKVCDFLHI (267 aa)) is amidoligase domain. Ser13 is a CTP binding site. Position 13 (Ser13) interacts with UTP. 14-19 (SLGKGI) lines the ATP pocket. Position 54 (Tyr54) interacts with L-glutamine. Residue Asp71 participates in ATP binding. Residues Asp71 and Glu141 each contribute to the Mg(2+) site. CTP is bound by residues 148–150 (DME), 188–193 (KTKPTQ), and Lys224. Residues 188 to 193 (KTKPTQ) and Lys224 each bind UTP. One can recognise a Glutamine amidotransferase type-1 domain in the interval 294–537 (KITLVGKYVE…IGAASGLPEQ (244 aa)). Gly356 contributes to the L-glutamine binding site. Cys383 functions as the Nucleophile; for glutamine hydrolysis in the catalytic mechanism. L-glutamine is bound by residues 384 to 387 (LGMQ), Glu407, and Arg465. Catalysis depends on residues His510 and Glu512.

Belongs to the CTP synthase family. As to quaternary structure, homotetramer.

It carries out the reaction UTP + L-glutamine + ATP + H2O = CTP + L-glutamate + ADP + phosphate + 2 H(+). The catalysed reaction is L-glutamine + H2O = L-glutamate + NH4(+). It catalyses the reaction UTP + NH4(+) + ATP = CTP + ADP + phosphate + 2 H(+). It functions in the pathway pyrimidine metabolism; CTP biosynthesis via de novo pathway; CTP from UDP: step 2/2. Allosterically activated by GTP, when glutamine is the substrate; GTP has no effect on the reaction when ammonia is the substrate. The allosteric effector GTP functions by stabilizing the protein conformation that binds the tetrahedral intermediate(s) formed during glutamine hydrolysis. Inhibited by the product CTP, via allosteric rather than competitive inhibition. Catalyzes the ATP-dependent amination of UTP to CTP with either L-glutamine or ammonia as the source of nitrogen. Regulates intracellular CTP levels through interactions with the four ribonucleotide triphosphates. The sequence is that of CTP synthase from Lactobacillus helveticus (strain DPC 4571).